Here is a 71-residue protein sequence, read N- to C-terminus: Protein KleB (71 aa).

Positions 9–28 (VTTNCRRCGKSISTLSRSLI) form a DNA-binding region, H-T-H motif.

This is Protein KleB (kleB) from Escherichia coli.